The following is a 441-amino-acid chain: Transcriptional regulatory protein ZraR (441 aa).

The region spanning 7–121 (DILVVDDDVS…RLQETLEKAL (115 aa)) is the Response regulatory domain. Residue Asp-56 is modified to 4-aspartylphosphate. The 230-residue stretch at 141–370 (MIGSSPAMQH…LENAIERAVV (230 aa)) folds into the Sigma-54 factor interaction domain. 4 residues coordinate ATP: Gly-172, Thr-173, Arg-329, and Arg-359. A DNA-binding region (H-T-H motif) is located at residues 421–440 (KTEAARQLGITRKTLLAKLS).

Phosphorylated by ZraS.

It is found in the cytoplasm. Its activity is regulated as follows. Activity of the ZraS/ZraR two-component system is repressed by the zinc-bound form of ZraP, which probably interacts with the periplasmic region of ZraS. Its function is as follows. Part of the Zra signaling pathway, an envelope stress response (ESR) system composed of the periplasmic accessory protein ZraP, the histidine kinase ZraS and the transcriptional regulator ZraR. The ZraPSR system contributes to antibiotic resistance and is important for membrane integrity in the presence of membrane-targeting biocides. ZraR is a member of the two-component regulatory system ZraS/ZraR. When activated by ZraS, acts in conjunction with sigma-54 to regulate the expression of zraP in the presence of high Zn(2+) or Pb(2+) concentrations. Also positively autoregulates the expression of the zraSR operon. The sequence is that of Transcriptional regulatory protein ZraR (zraR) from Salmonella typhi.